A 455-amino-acid chain; its full sequence is Beta-glucosidase A (455 aa).

The active-site Proton donor is the glutamate 165. Glutamate 363 functions as the Nucleophile in the catalytic mechanism.

The protein belongs to the glycosyl hydrolase 1 family.

It carries out the reaction Hydrolysis of terminal, non-reducing beta-D-glucosyl residues with release of beta-D-glucose.. The chain is Beta-glucosidase A (bglA) from Caldicellulosiruptor saccharolyticus (Caldocellum saccharolyticum).